The following is a 278-amino-acid chain: Alcohol dehydrogenase-related 31 kDa protein (278 aa).

11 to 34 (YVADCGGIALETSKVLMTKNIAKL) is an NAD(+) binding site. Ser139 contacts substrate. Tyr152 serves as the catalytic Proton acceptor.

Belongs to the short-chain dehydrogenases/reductases (SDR) family.

This chain is Alcohol dehydrogenase-related 31 kDa protein (Adhr), found in Drosophila pseudoobscura pseudoobscura (Fruit fly).